The following is a 624-amino-acid chain: Pentatricopeptide repeat-containing protein At4g31070, mitochondrial (624 aa).

The transit peptide at 1–15 directs the protein to the mitochondrion; that stretch reads MRWVKLGRRVIMSRA. 14 PPR repeats span residues 56–91, 92–122, 123–157, 158–192, 195–225, 226–260, 261–296, 297–327, 328–362, 363–397, 398–428, 429–463, 464–498, and 499–529; these read FTAI…GADC, DTVV…MLHR, DTVS…GFIP, KSEL…DERM, SVLL…MEVK, NEVS…NLRP, NRVT…GCHA, DERL…SKVR, DVVM…GIEA, NSVT…GFMS, HILL…LTEK, DLVS…GHEV, DDMA…HMPV, and TLEH…MPMK. The tract at residues 534-610 is type E motif; sequence IWSSLLSACE…CYGFSKIEPE (77 aa).

It belongs to the PPR family. PCMP-E subfamily.

The protein localises to the mitochondrion. This Arabidopsis thaliana (Mouse-ear cress) protein is Pentatricopeptide repeat-containing protein At4g31070, mitochondrial (PCMP-E7).